Reading from the N-terminus, the 670-residue chain is Solute carrier organic anion transporter family member 1A5 (670 aa).

The Cytoplasmic portion of the chain corresponds to 1 to 20; that stretch reads MGETEKRIATHGVRCFSKIK. Residues 21–40 traverse the membrane as a helical segment; it reads MFLLALTCAYVSKSLSGIYM. The Extracellular portion of the chain corresponds to 41–59; it reads NSMLTQIERQFDIPTSIVG. Residues 60–80 traverse the membrane as a helical segment; it reads LINGSFEIGNLLLIILVSYFG. Residues 81–86 are Cytoplasmic-facing; the sequence is TKLHRP. A helical transmembrane segment spans residues 87-111; it reads IMIGIGCVIMGLGCFLMSLPHFLMG. Residues 112–155 lie on the Extracellular side of the membrane; it reads RYEYETTISPTSNLSSNSFLCMENRTQTLKPTQDPAECVKEMKS. N-linked (GlcNAc...) asparagine glycans are attached at residues N124 and N135. The chain crosses the membrane as a helical span at residues 156 to 184; the sequence is LMWIYVLVGNIIRGIGETPIMPLGISYIE. Topologically, residues 185 to 203 are cytoplasmic; sequence DFAKSENSPLYIGILESGK. Residues 204–224 form a helical membrane-spanning segment; sequence MIGPIVGLLLGSFCARIYVDT. At 225 to 242 the chain is on the extracellular side; the sequence is GSVNTDDLTITPTDTRWV. The chain crosses the membrane as a helical span at residues 243 to 267; sequence GAWWIGFLVCAGVNILTSIPFFFFP. Over 268–311 the chain is Cytoplasmic; sequence KTLPKEGLQDNVARTENDKEEKHREKAKEENRGITKDFLPFMKS. The chain crosses the membrane as a helical span at residues 312–333; it reads LSCNPIYMLLILTSVLQINAFI. Over 334–353 the chain is Extracellular; sequence NMFTFLPKYLEQQYGKSTSE. A helical transmembrane segment spans residues 354–377; that stretch reads VVLLIGVCNLPPICIGYLLIGFIM. At 378–381 the chain is on the cytoplasmic side; sequence KKFR. Residues 382–405 form a helical membrane-spanning segment; sequence ITVKKAAYMAFCLSLFEYLLSYFH. Residues 406 to 513 lie on the Extracellular side of the membrane; it reads FMISCDNFQV…PECANKLQYF (108 aa). Residues 433-488 form the Kazal-like domain; sequence NKVLADCNTRCSCLTNTWDPVCGDNGLSYMSACLAGCEKSVGMGTHMVFQNCSCIQ. 3 disulfides stabilise this stretch: C439/C469, C445/C465, and C454/C486. N-linked (GlcNAc...) asparagine glycans are attached at residues N483 and N492. A helical membrane pass occupies residues 514 to 536; it reads LIMSVIGSFIYSITAIPGYMVLL. Over 537–545 the chain is Cytoplasmic; it reads RCIKSEEKS. Residues 546 to 571 traverse the membrane as a helical segment; that stretch reads LGIGLHAFCTRIFAGIPAPIYFGALI. Over 572-605 the chain is Extracellular; the sequence is DRTCLHWGTLKCGEPGACRIYNINNFRRIYLVLP. A helical membrane pass occupies residues 606-623; it reads AALRGSSYLPAFFILILM. Residues 624 to 670 are Cytoplasmic-facing; that stretch reads RKFQLPGEMYSSETELADMKQTVKKSECTDVHGIPKVENDGELKTKL.

The protein belongs to the organo anion transporter (TC 2.A.60) family. As to expression, expressed in brain, choroid plexus and lung, but not in liver or kidney.

The protein resides in the cell membrane. It localises to the basal cell membrane. The catalysed reaction is taurocholate(out) = taurocholate(in). It catalyses the reaction glycocholate(out) = glycocholate(in). It carries out the reaction taurochenodeoxycholate(out) = taurochenodeoxycholate(in). The enzyme catalyses tauroursodeoxycholate(out) = tauroursodeoxycholate(in). The catalysed reaction is 3,3',5'-triiodo-L-thyronine(out) = 3,3',5'-triiodo-L-thyronine(in). It catalyses the reaction L-thyroxine(out) = L-thyroxine(in). It carries out the reaction taurodeoxycholate(out) = taurodeoxycholate(in). The enzyme catalyses glycodeoxycholate(out) = glycodeoxycholate(in). The catalysed reaction is glycochenodeoxycholate(out) = glycochenodeoxycholate(in). It catalyses the reaction glycoursodeoxycholate(out) = glycoursodeoxycholate(in). It carries out the reaction estrone 3-sulfate(out) = estrone 3-sulfate(in). The enzyme catalyses prostaglandin E2(out) = prostaglandin E2(in). The catalysed reaction is substance P(out) = substance P(in). Na(+)-independent transporter that mediates the cellular uptake of a broad range of organic anions such as the endogenous bile salts cholate and deoxycholate, either in their unconjugated or conjugated forms (taurocholate and glycocholate), estrone 3-sulfate and prostaglandin E2, at the plasma membrane. Responsible for intestinal absorption of bile acids. Capable of thyroid hormone transport (both T3 or 3,3',5'-triiodo-L-thyronine, and T4 or L-tyroxine). Plays roles in blood-brain and -cerebrospinal fluid barrier transport of organic anions and signal mediators, and in hormone uptake by neural cells. May also play a role in the reuptake of neuropeptides such as substance P/TAC1 and vasoactive intestinal peptide/VIP released from retinal neurons. Shows a pH-sensitive substrate specificity which may be ascribed to the protonation state of the binding site and leads to a stimulation of substrate transport in an acidic microenvironment. Hydrogencarbonate/HCO3(-) acts as the probable counteranion that exchanges for organic anions. May contribute to regulate the transport of organic compounds in testis across the blood-testis-barrier. The protein is Solute carrier organic anion transporter family member 1A5 (Slco1a5) of Mus musculus (Mouse).